Here is an 88-residue protein sequence, read N- to C-terminus: Small ribosomal subunit protein uS17 (88 aa).

This sequence belongs to the universal ribosomal protein uS17 family. In terms of assembly, part of the 30S ribosomal subunit.

In terms of biological role, one of the primary rRNA binding proteins, it binds specifically to the 5'-end of 16S ribosomal RNA. The sequence is that of Small ribosomal subunit protein uS17 from Marinobacter nauticus (strain ATCC 700491 / DSM 11845 / VT8) (Marinobacter aquaeolei).